The following is a 403-amino-acid chain: CCA-adding enzyme (403 aa).

ATP-binding residues include Gly32 and Arg35. CTP is bound by residues Gly32 and Arg35. Mg(2+) contacts are provided by Asp45 and Asp47. Residues Arg116, Asp159, Arg162, Arg165, and Arg168 each coordinate ATP. Positions 116, 159, 162, 165, and 168 each coordinate CTP.

It belongs to the tRNA nucleotidyltransferase/poly(A) polymerase family. Bacterial CCA-adding enzyme type 3 subfamily. Homodimer. It depends on Mg(2+) as a cofactor.

The catalysed reaction is a tRNA precursor + 2 CTP + ATP = a tRNA with a 3' CCA end + 3 diphosphate. It carries out the reaction a tRNA with a 3' CCA end + 2 CTP + ATP = a tRNA with a 3' CCACCA end + 3 diphosphate. Functionally, catalyzes the addition and repair of the essential 3'-terminal CCA sequence in tRNAs without using a nucleic acid template. Adds these three nucleotides in the order of C, C, and A to the tRNA nucleotide-73, using CTP and ATP as substrates and producing inorganic pyrophosphate. tRNA 3'-terminal CCA addition is required both for tRNA processing and repair. Also involved in tRNA surveillance by mediating tandem CCA addition to generate a CCACCA at the 3' terminus of unstable tRNAs. While stable tRNAs receive only 3'-terminal CCA, unstable tRNAs are marked with CCACCA and rapidly degraded. This is CCA-adding enzyme from Limosilactobacillus reuteri (strain DSM 20016) (Lactobacillus reuteri).